A 589-amino-acid polypeptide reads, in one-letter code: Serine/threonine-protein phosphatase 2A 65 kDa regulatory subunit A alpha isoform (589 aa).

The residue at position 2 (alanine 2) is an N-acetylalanine. 15 HEAT repeats span residues 8–46, 47–84, 85–123, 124–161, 162–200, 201–239, 240–278, 279–321, 322–360, 361–399, 400–438, 439–477, 478–516, 517–555, and 556–589; these read DSLY…GVER, TRSE…GGPE, YVHC…SPSD, LEAH…VSSA, VKAE…ELDN, VKSE…PQED, LEAL…GPEI, TKTD…RENV, IMTQ…GKDS, TIEH…GIRQ, LSQS…GVEF, FDEK…GKEW, AHAT…GQDI, TTKH…DNST, and LQSE…LSLA. Residues 8 to 399 form a PP2A subunit B binding region; that stretch reads DSLYPIAVLI…CVNEVIGIRQ (392 aa). Residues 47–321 are polyoma small and medium T antigens Binding; that stretch reads TRSELLPFLT…NLSADCRENV (275 aa). Residues 85-239 are SV40 small T antigen binding; sequence YVHCLLPPLE…NIAQLLPQED (155 aa). Lysine 280 is modified (N6-acetyllysine). The interval 400 to 589 is PP2A subunit C binding; the sequence is LSQSLLPAIV…QEALTVLSLA (190 aa).

The protein belongs to the phosphatase 2A regulatory subunit A family. As to quaternary structure, PP2A consists of a common heterodimeric core enzyme, composed of PPP2CA a 36 kDa catalytic subunit (subunit C) and PPP2R1A a 65 kDa constant regulatory subunit (PR65 or subunit A), that associates with a variety of regulatory subunits. Proteins that associate with the core dimer include three families of regulatory subunits B (the R2/B/PR55/B55, R3/B''/PR72/PR130/PR59 and R5/B'/B56 families), the 48 kDa variable regulatory subunit, viral proteins, and cell signaling molecules. Found in a complex with at least ARL2, PPP2CB, PPP2R1A, PPP2R2A, PPP2R5E and TBCD. Interacts with the PP2A C catalytic subunit PPP2CA. Interacts with the PP2A B subunit PPP2R2A. Interacts with the PP2A B subunit PPP2R5D. Interacts with FOXO1; the interaction dephosphorylates FOXO1 on AKT-mediated phosphorylation sites. Interacts with IPO9. Interacts with TP53 and SGO1. Interacts with PLA2G16; this interaction might decrease PP2A activity. Interacts with CTTNBP2NL. Interacts with GNA12; the interaction promotes protein phosphatase 2A activation causing dephosphorylation of MAPT. Interacts with CIP2A; this interaction stabilizes CIP2A. Interacts with PABIR1/FAM122A. Interacts with ADCY8; antagonizes interaction between ADCY8 and calmodulin. Interacts with CRTC3 (when phosphorylated at 'Ser-391'). Interacts with SPRY2. Part of the core of STRIPAK complexes composed of PP2A catalytic and scaffolding subunits, the striatins (PP2A regulatory subunits), the striatin-associated proteins MOB4, STRIP1 and STRIP2, PDCD10 and members of the STE20 kinases, such as STK24 and STK26. Component of the Integrator-PP2A (INTAC) complex, composed of the Integrator core complex and protein phosphatase 2A subunits PPP2CA and PPP2R1A.

The protein localises to the cytoplasm. It localises to the nucleus. The protein resides in the chromosome. Its subcellular location is the centromere. It is found in the lateral cell membrane. The protein localises to the cell projection. It localises to the dendrite. Functionally, the PR65 subunit of protein phosphatase 2A serves as a scaffolding molecule to coordinate the assembly of the catalytic subunit and a variable regulatory B subunit. Upon interaction with GNA12 promotes dephosphorylation of microtubule associated protein TAU/MAPT. Required for proper chromosome segregation and for centromeric localization of SGO1 in mitosis. Together with RACK1 adapter, mediates dephosphorylation of AKT1 at 'Ser-473', preventing AKT1 activation and AKT-mTOR signaling pathway. Dephosphorylation of AKT1 is essential for regulatory T-cells (Treg) homeostasis and stability. Part of the striatin-interacting phosphatase and kinase (STRIPAK) complexes. STRIPAK complexes have critical roles in protein (de)phosphorylation and are regulators of multiple signaling pathways including Hippo, MAPK, nuclear receptor and cytoskeleton remodeling. Different types of STRIPAK complexes are involved in a variety of biological processes such as cell growth, differentiation, apoptosis, metabolism and immune regulation. Key mediator of a quality checkpoint during transcription elongation as part of the Integrator-PP2A (INTAC) complex. The INTAC complex drives premature transcription termination of transcripts that are unfavorably configured for transcriptional elongation: within the INTAC complex, acts as a scaffolding subunit for PPP2CA, which catalyzes dephosphorylation of the C-terminal domain (CTD) of Pol II subunit POLR2A/RPB1 and SUPT5H/SPT5, thereby preventing transcriptional elongation. Regulates the recruitment of the SKA complex to kinetochores. This chain is Serine/threonine-protein phosphatase 2A 65 kDa regulatory subunit A alpha isoform (PPP2R1A), found in Bos taurus (Bovine).